The primary structure comprises 301 residues: Probable alpha-L-glutamate ligase (301 aa).

One can recognise an ATP-grasp domain in the interval 104–287 (LQLLSRKGIG…VAGMIYEFIE (184 aa)). Residues K141, 178–179 (EF), D187, and 211–213 (RSN) each bind ATP. Mg(2+) is bound by residues D248, E260, and N262. The Mn(2+) site is built by D248, E260, and N262.

The protein belongs to the RimK family. Mg(2+) is required as a cofactor. The cofactor is Mn(2+).

The sequence is that of Probable alpha-L-glutamate ligase from Vibrio vulnificus (strain CMCP6).